Here is a 261-residue protein sequence, read N- to C-terminus: Probable RNA-binding protein ARP1 (261 aa).

The 78-residue stretch at 17–94 (TKVFVGGLAW…RRANCNLASL (78 aa)) folds into the RRM domain. A disordered region spans residues 96–122 (GRLRKSPTMTSPQQGPKNGNRATPPHV). Over residues 102 to 116 (PTMTSPQQGPKNGNR) the composition is skewed to polar residues.

Expressed in vasculature of leaves, roots and siliques.

It localises to the nucleus. Its function is as follows. Probable RNA-binding protein involved in the regulation of abscisic acid (ABA) response during seed germination. May regulate transcript levels of several germination-responsive genes under ABA. The polypeptide is Probable RNA-binding protein ARP1 (Arabidopsis thaliana (Mouse-ear cress)).